We begin with the raw amino-acid sequence, 212 residues long: Protein-L-isoaspartate O-methyltransferase (212 aa).

Residue S60 is part of the active site.

It belongs to the methyltransferase superfamily. L-isoaspartyl/D-aspartyl protein methyltransferase family.

The protein localises to the cytoplasm. It carries out the reaction [protein]-L-isoaspartate + S-adenosyl-L-methionine = [protein]-L-isoaspartate alpha-methyl ester + S-adenosyl-L-homocysteine. Catalyzes the methyl esterification of L-isoaspartyl residues in peptides and proteins that result from spontaneous decomposition of normal L-aspartyl and L-asparaginyl residues. It plays a role in the repair and/or degradation of damaged proteins. The protein is Protein-L-isoaspartate O-methyltransferase of Methanococcus maripaludis (strain DSM 14266 / JCM 13030 / NBRC 101832 / S2 / LL).